The primary structure comprises 142 residues: Transcription antitermination protein NusB (142 aa).

Belongs to the NusB family.

Involved in transcription antitermination. Required for transcription of ribosomal RNA (rRNA) genes. Binds specifically to the boxA antiterminator sequence of the ribosomal RNA (rrn) operons. This is Transcription antitermination protein NusB from Streptococcus mutans serotype c (strain ATCC 700610 / UA159).